Reading from the N-terminus, the 864-residue chain is Leucine--tRNA ligase (864 aa).

Residues 42–52 carry the 'HIGH' region motif; sequence PYPSGKLHMGH. A 'KMSKS' region motif is present at residues 624–628; sequence KMSKS. Lysine 627 contributes to the ATP binding site.

Belongs to the class-I aminoacyl-tRNA synthetase family.

Its subcellular location is the cytoplasm. The catalysed reaction is tRNA(Leu) + L-leucine + ATP = L-leucyl-tRNA(Leu) + AMP + diphosphate. The sequence is that of Leucine--tRNA ligase from Burkholderia multivorans (strain ATCC 17616 / 249).